A 193-amino-acid polypeptide reads, in one-letter code: Translocation protein SEC72 (193 aa).

Component of the heterotetrameric Sec62/63complex composed of SEC62, SEC63, SEC71 and SEC72. The Sec62/63 complex associates with the Sec61 complex to form the Sec complex. May interact with protein YLR301W. Part of a complex consisting of KAR2, SEC63, SEC66 and SEC72.

The protein localises to the cytoplasm. Functionally, acts as a non-essential component of the Sec62/63 complex which is involved in SRP-independent post-translational translocation across the endoplasmic reticulum (ER) and functions together with the Sec61 complex and KAR2 in a channel-forming translocon complex. A cycle of assembly and disassembly of Sec62/63 complex from SEC61 may govern the activity of the translocon. SEC72 may be involved in signal peptide recognition for a defined subset of leader peptides, or may increase the efficiency of unusual or 'difficult' secretory precursors to the translocation pore, it may be that this protein binds charged leader peptides to the membrane until they engage the translocation apparatus. This chain is Translocation protein SEC72 (SEC72), found in Saccharomyces cerevisiae (strain ATCC 204508 / S288c) (Baker's yeast).